The primary structure comprises 296 residues: Morphine 6-dehydrogenase (296 aa).

13–22 (GVKMPALGLG) is a binding site for NADP(+). Tyr-52 acts as the Proton donor in catalysis. Substrate is bound at residue His-110.

This sequence belongs to the aldo/keto reductase family. In terms of assembly, monomer.

The catalysed reaction is morphine + NAD(+) = morphinone + NADH + H(+). It carries out the reaction morphine + NADP(+) = morphinone + NADPH + H(+). It participates in alkaloid degradation; codeine degradation. The protein operates within alkaloid degradation; morphine degradation. Its function is as follows. Oxidizes only the C-6 hydroxy group of morphine and codeine. The chain is Morphine 6-dehydrogenase (morA) from Pseudomonas putida (Arthrobacter siderocapsulatus).